A 404-amino-acid chain; its full sequence is Probable tRNA sulfurtransferase (404 aa).

The region spanning 60–165 (QPIVEALKLV…DEAAYISYEE (106 aa)) is the THUMP domain. ATP-binding positions include 183-184 (ML), 208-209 (HF), Arg-265, Gly-287, and Gln-296.

It belongs to the ThiI family.

It is found in the cytoplasm. The catalysed reaction is [ThiI sulfur-carrier protein]-S-sulfanyl-L-cysteine + a uridine in tRNA + 2 reduced [2Fe-2S]-[ferredoxin] + ATP + H(+) = [ThiI sulfur-carrier protein]-L-cysteine + a 4-thiouridine in tRNA + 2 oxidized [2Fe-2S]-[ferredoxin] + AMP + diphosphate. The enzyme catalyses [ThiS sulfur-carrier protein]-C-terminal Gly-Gly-AMP + S-sulfanyl-L-cysteinyl-[cysteine desulfurase] + AH2 = [ThiS sulfur-carrier protein]-C-terminal-Gly-aminoethanethioate + L-cysteinyl-[cysteine desulfurase] + A + AMP + 2 H(+). Its pathway is cofactor biosynthesis; thiamine diphosphate biosynthesis. Functionally, catalyzes the ATP-dependent transfer of a sulfur to tRNA to produce 4-thiouridine in position 8 of tRNAs, which functions as a near-UV photosensor. Also catalyzes the transfer of sulfur to the sulfur carrier protein ThiS, forming ThiS-thiocarboxylate. This is a step in the synthesis of thiazole, in the thiamine biosynthesis pathway. The sulfur is donated as persulfide by IscS. In Streptococcus pyogenes serotype M4 (strain MGAS10750), this protein is Probable tRNA sulfurtransferase.